We begin with the raw amino-acid sequence, 894 residues long: Leucine--tRNA ligase, mitochondrial (894 aa).

Residues 1–9 (MLPRPSSRF) constitute a mitochondrion transit peptide. The 'HIGH' region signature appears at 56–66 (PYPSGVLHIGH). The 'KMSKS' region signature appears at 646–650 (KMSKS). Residue Lys649 participates in ATP binding.

This sequence belongs to the class-I aminoacyl-tRNA synthetase family.

It is found in the mitochondrion matrix. The catalysed reaction is tRNA(Leu) + L-leucine + ATP = L-leucyl-tRNA(Leu) + AMP + diphosphate. The protein is Leucine--tRNA ligase, mitochondrial (NAM2) of Saccharomyces paradoxus (Yeast).